A 600-amino-acid polypeptide reads, in one-letter code: Pyranose dehydrogenase 2 (600 aa).

The signal sequence occupies residues 1–25 (MLSRVAKLNSRLVSLALLGSQIAFG). N99 and N114 each carry an N-linked (GlcNAc...) asparagine glycan. At H127 the chain carries Tele-8alpha-FAD histidine. N-linked (GlcNAc...) asparagine glycans are attached at residues N199, N275, and N342. H535 (proton acceptor) is an active-site residue. H579 is a catalytic residue.

Belongs to the GMC oxidoreductase family. As to quaternary structure, monomer. It depends on FAD as a cofactor. N-glycosylated.

It localises to the secreted. It carries out the reaction pyranose + acceptor = pyranos-2-ulose + reduced acceptor.. The catalysed reaction is pyranose + acceptor = pyranos-3-ulose + reduced acceptor.. It catalyses the reaction pyranose + acceptor = pyranos-2,3-diulose + reduced acceptor.. The enzyme catalyses a pyranoside + acceptor = a pyranosid-3-ulose + reduced acceptor.. It carries out the reaction a pyranoside + acceptor = a pyranosid-3,4-diulose + reduced acceptor.. Catalyzes the single-oxidation or sequential double oxidation reaction of carbohydrates primarily at carbon-2 and/or carbon-3 with the concomitant reduction of the flavin. The enzyme exhibits a broad sugar substrate specificity, oxidizing different aldopyranoses to the corresponding C-1, C-2, C-3 or C-1,2, C-2,3 and C-3,4 (di)dehydro sugars with substrate-specific regioselectivity. Accepts only a narrow range of electron acceptors such as substituted benzoquinones and complexed metal ions and reacts extremely slowly with O(2) as acceptor. May play a role in the natural recycling of plant matter by oxidizing all major monosaccharides in lignocellulose and by reducing quinone compounds or reactive radical species generated during lignin depolymerization. The protein is Pyranose dehydrogenase 2 of Leucoagaricus meleagris (Western flat-topped agaric).